Reading from the N-terminus, the 361-residue chain is [LysW]-lysine hydrolase (361 aa).

A Zn(2+)-binding site is contributed by histidine 67. Residue aspartate 69 is part of the active site. Residue aspartate 91 coordinates Zn(2+). Residue glutamate 124 is the Proton acceptor of the active site. Positions 125, 148, and 326 each coordinate Zn(2+).

The protein belongs to the peptidase M20A family. LysK subfamily. Homotetramer and homooctamer. It depends on Zn(2+) as a cofactor. The cofactor is Co(2+).

The protein localises to the cytoplasm. The catalysed reaction is [amino-group carrier protein]-C-terminal-gamma-(L-lysyl)-L-glutamate + H2O = [amino-group carrier protein]-C-terminal-L-glutamate + L-lysine. Its pathway is amino-acid biosynthesis; L-lysine biosynthesis via AAA pathway; L-lysine from L-alpha-aminoadipate (Thermus route): step 5/5. Functionally, catalyzes the release of L-lysine from [LysW]-gamma-L-lysine. In vitro, can deacetylate both N(2)-acetyl-L-lysine and N(2)-acetyl-L-ornithine. The polypeptide is [LysW]-lysine hydrolase (Thermus thermophilus (strain ATCC BAA-163 / DSM 7039 / HB27)).